Reading from the N-terminus, the 175-residue chain is NADH-ubiquinone oxidoreductase chain 6 (175 aa).

The next 5 helical transmembrane spans lie at 1 to 21 (MMLY…VGFS), 25 to 45 (SPIY…GIVL), 47 to 67 (FGGS…MMVV), 88 to 108 (AVLG…YYVL), and 149 to 169 (YGTW…VVIM).

This sequence belongs to the complex I subunit 6 family. In terms of assembly, core subunit of respiratory chain NADH dehydrogenase (Complex I) which is composed of 45 different subunits.

The protein localises to the mitochondrion inner membrane. The catalysed reaction is a ubiquinone + NADH + 5 H(+)(in) = a ubiquinol + NAD(+) + 4 H(+)(out). Core subunit of the mitochondrial membrane respiratory chain NADH dehydrogenase (Complex I) which catalyzes electron transfer from NADH through the respiratory chain, using ubiquinone as an electron acceptor. Essential for the catalytic activity and assembly of complex I. This Bos mutus grunniens (Wild yak) protein is NADH-ubiquinone oxidoreductase chain 6 (MT-ND6).